A 58-amino-acid polypeptide reads, in one-letter code: Small ribosomal subunit protein bS21 (58 aa).

The tract at residues 39 to 58 (EKPSVKRKRKSEVARKRKKF) is disordered. A compositionally biased stretch (basic residues) spans 43–58 (VKRKRKSEVARKRKKF).

This sequence belongs to the bacterial ribosomal protein bS21 family.

The protein is Small ribosomal subunit protein bS21 of Streptococcus pneumoniae (strain ATCC BAA-255 / R6).